Here is a 437-residue protein sequence, read N- to C-terminus: GTPase Der (437 aa).

EngA-type G domains are found at residues 3 to 168 (PLIA…PETE) and 178 to 353 (IQLA…QNRS). GTP is bound by residues 9-16 (GRPNVGKS), 56-60 (DTGGY), 120-123 (NKVE), 184-191 (GRPNVGKS), 231-235 (DTAGL), and 296-299 (NKWD). The 84-residue stretch at 354–437 (RKISTSVLNK…VPISMRFMQK (84 aa)) folds into the KH-like domain.

This sequence belongs to the TRAFAC class TrmE-Era-EngA-EngB-Septin-like GTPase superfamily. EngA (Der) GTPase family. Associates with the 50S ribosomal subunit.

Functionally, GTPase that plays an essential role in the late steps of ribosome biogenesis. The chain is GTPase Der from Pelodictyon phaeoclathratiforme (strain DSM 5477 / BU-1).